The chain runs to 476 residues: ATP synthase subunit beta (476 aa).

Residue 154-161 (GGAGVGKT) coordinates ATP.

The protein belongs to the ATPase alpha/beta chains family. As to quaternary structure, F-type ATPases have 2 components, CF(1) - the catalytic core - and CF(0) - the membrane proton channel. CF(1) has five subunits: alpha(3), beta(3), gamma(1), delta(1), epsilon(1). CF(0) has four main subunits: a(1), b(1), b'(1) and c(9-12).

Its subcellular location is the cell inner membrane. The enzyme catalyses ATP + H2O + 4 H(+)(in) = ADP + phosphate + 5 H(+)(out). In terms of biological role, produces ATP from ADP in the presence of a proton gradient across the membrane. The catalytic sites are hosted primarily by the beta subunits. The sequence is that of ATP synthase subunit beta from Rhodopseudomonas palustris (strain BisB5).